The chain runs to 5193 residues: Usherin (5193 aa).

Positions 1–34 (MHYLALSPGFLCYTIKTLILAYLASVLVLAASQG) are cleaved as a signal peptide. Topologically, residues 35–5033 (VFPRLENVGA…KSTEFYSELW (4999 aa)) are extracellular. Asn-230, Asn-258, Asn-274, Asn-358, Asn-415, Asn-448, and Asn-469 each carry an N-linked (GlcNAc...) asparagine glycan. Positions 268–514 (QDFRLYNVSL…AVDEIIVSGR (247 aa)) constitute a Laminin N-terminal domain. 24 disulfides stabilise this stretch: Cys-515–Cys-524, Cys-517–Cys-533, Cys-535–Cys-546, Cys-549–Cys-569, Cys-572–Cys-581, Cys-574–Cys-602, Cys-605–Cys-614, Cys-617–Cys-635, Cys-638–Cys-652, Cys-640–Cys-659, Cys-661–Cys-670, Cys-673–Cys-688, Cys-691–Cys-705, Cys-693–Cys-712, Cys-714–Cys-723, Cys-726–Cys-741, Cys-744–Cys-756, Cys-746–Cys-763, Cys-765–Cys-774, Cys-777–Cys-789, Cys-792–Cys-805, Cys-794–Cys-812, Cys-814–Cys-823, and Cys-826–Cys-846. 10 Laminin EGF-like domains span residues 515–571 (CQCH…NCKP), 572–637 (CQCH…ACKL), 638–690 (CDCN…GCRP), 691–743 (CNCN…GCEP), 744–791 (CQCN…ACEV), 792–848 (CDCS…NCEK), 853–896 (NGSL…GCQA), 897–947 (CDCD…GCLP), 948–998 (CLCH…RCRP), and 999–1049 (CHCH…GCSK). A glycan (N-linked (GlcNAc...) asparagine) is linked at Asn-647. 2 N-linked (GlcNAc...) asparagine glycosylation sites follow: Asn-836 and Asn-853. 14 disulfides stabilise this stretch: Cys-867–Cys-876, Cys-879–Cys-894, Cys-897–Cys-910, Cys-899–Cys-917, Cys-919–Cys-928, Cys-931–Cys-945, Cys-948–Cys-960, Cys-950–Cys-967, Cys-969–Cys-979, Cys-982–Cys-996, Cys-999–Cys-1011, Cys-1001–Cys-1018, Cys-1020–Cys-1029, and Cys-1032–Cys-1047. N-linked (GlcNAc...) asparagine glycosylation occurs at Asn-885. A glycan (N-linked (GlcNAc...) asparagine) is linked at Asn-941. An N-linked (GlcNAc...) asparagine glycan is attached at Asn-1008. 5 consecutive Fibronectin type-III domains span residues 1055-1143 (PPPR…TKPE), 1147-1241 (GHLN…APPQ), 1242-1357 (TQGP…SVPV), 1358-1462 (FMAP…AAPA), and 1463-1566 (QLRP…LQLK). N-linked (GlcNAc...) asparagine glycans are attached at residues Asn-1068, Asn-1089, Asn-1150, Asn-1171, and Asn-1222. 3 N-linked (GlcNAc...) asparagine glycosylation sites follow: Asn-1382, Asn-1473, and Asn-1626. 2 Laminin G-like domains span residues 1511 to 1700 (TKGT…WEGC) and 1705 to 1882 (EEGV…QDGC). Cys-1663 and Cys-1700 are oxidised to a cystine. The N-linked (GlcNAc...) asparagine glycan is linked to Asn-1770. Fibronectin type-III domains are found at residues 1847–1946 (EPGF…TAPQ), 1948–2045 (VPTP…TPQE), 2046–2132 (APQE…TAQL), 2133–2234 (PPEQ…IPEG), 2235–2321 (VPAP…APPE), 2322–2421 (GVVN…SVEM), 2422–2525 (PPGA…DKPG), 2526–2613 (PIDA…TLPG), 2617–2713 (GIPS…TRPC), 2717–2810 (GVQP…THPA), 2811–2914 (PPQE…TLAG), 2918–3009 (RGAT…MWEE), and 3013–3103 (GMLP…TPSD). Residues Cys-1853 and Cys-1882 are joined by a disulfide bond. N-linked (GlcNAc...) asparagine glycosylation is present at Asn-1894. The segment at 1931–1955 (VSSDWSRGRTLGTAPQSVPTPSRAQ) is disordered. The segment covering 1943–1955 (TAPQSVPTPSRAQ) has biased composition (polar residues). Asn-1958, Asn-2095, Asn-2121, Asn-2177, Asn-2186, Asn-2249, Asn-2276, Asn-2313, Asn-2368, and Asn-2404 each carry an N-linked (GlcNAc...) asparagine glycan. N-linked (GlcNAc...) asparagine glycans are attached at residues Asn-2575, Asn-2647, Asn-2701, Asn-2761, and Asn-2779. 7 N-linked (GlcNAc...) asparagine glycosylation sites follow: Asn-2928, Asn-2998, Asn-3023, Asn-3090, Asn-3208, Asn-3322, and Asn-3411. Fibronectin type-III domains lie at 3395–3489 (CPAT…TRED), 3490–3580 (VPEG…TTQR), 3581–3671 (SPEN…TLQA), 3672–3766 (APQG…TPED), 3769–3857 (PPCN…TLEA), 3858–3955 (APVG…TLEA), 3956–4059 (PPRG…SAPS), 4060–4148 (GLMN…APPD), 4149–4256 (TQMA…APPD), 4257–4346 (GLSP…TPEV), 4347–4437 (PPSE…APPE), 4438–4522 (NMDP…TSPS), 4523–4625 (APSG…VPPL), 4628–4725 (PAPH…TGPA), 4726–4818 (PPEG…THPA), 4819–4921 (PPSG…TKKE), and 4922–5005 (MPQY…YDAA). 6 N-linked (GlcNAc...) asparagine glycosylation sites follow: Asn-3589, Asn-3645, Asn-3686, Asn-3712, Asn-3723, and Asn-3772. 8 N-linked (GlcNAc...) asparagine glycosylation sites follow: Asn-3976, Asn-4063, Asn-4194, Asn-4218, Asn-4304, Asn-4340, Asn-4365, and Asn-4410. N-linked (GlcNAc...) asparagine glycans are attached at residues Asn-4556, Asn-4575, Asn-4683, Asn-4716, Asn-4746, Asn-4756, Asn-4765, Asn-4915, and Asn-4934. The helical transmembrane segment at 5034-5054 (FIMVMAVVGLILLAIFLSLIL) threads the bilayer. At 5055–5193 (QRKIHKEPCI…EHTAFTDTHL (139 aa)) the chain is on the cytoplasmic side. The PDZ-binding signature appears at 5191–5193 (THL).

In terms of assembly, interacts with collagen IV and fibronectin via its laminin EGF-like domains. Interaction with collagen may be required for stable integration into the basement membrane. Interacts with NINL. Interacts with USH1C. Component of USH2 complex, composed of ADGRV1, PDZD7, USH2A and WHRN. Interacts with ADGRV1/MASS1 (via N-terminal PDZ domain). Interacts (via the cytoplasmic region) with WHRN. Interacts (via the cytoplasmic region) with PDZD7. Interacts (via the cytoplasmic region) with VEZT and MYO7A (via MyTH4-FERM domains); the interaction associates VEZT with the USH2 complex at the stereocilia base. Present in the testis, epididymis, oviduct, spleen, submaxillary gland, and small and large intestines. Not detected in the brain, skin, lung, skeletal muscle, cardiac muscle, liver or kidney. Expressed in smooth muscle of the colon and the epididymis. Also present in select vascular basement membranes. In the cochlea, it is present in virtually every basement membrane. It is particularly high in the strial capillary basement membranes (SCBMs). In the retina, it is again expressed in all of the basement membranes. It is also very prevalent in the lens capsule and the Bruch's layer between the retinal pigment epithelium and the choroid layer, which is very rich in basement membranes. In neonates in it is widely expressed in the basement membranes of the cochlea. Present in the synaptic terminals of retinal photoreceptors (at protein level).

It is found in the cell projection. It localises to the stereocilium membrane. The protein localises to the photoreceptor inner segment. The protein resides in the secreted. Functionally, involved in hearing and vision as member of the USH2 complex. In the inner ear, required for the maintenance of hair bundle ankle formation, which connects growing stereocilia in developing cochlear hair cells. In retina photoreceptors, the USH2 complex is required for the maintenance of periciliary membrane complex that seems to play a role in regulating intracellular protein transport. This chain is Usherin (Ush2A), found in Mus musculus (Mouse).